A 262-amino-acid polypeptide reads, in one-letter code: Abhydrolase domain-containing protein ACTT2-1 (262 aa).

Positions Ser260–Leu262 match the Peroxisomal targeting signal type 1 motif.

This sequence belongs to the AB hydrolase superfamily. AKT2 hydrolase family.

Its subcellular location is the peroxisome. Its pathway is mycotoxin biosynthesis. Abhydrolase domain-containing protein; part of the gene clusters that mediate the biosynthesis of the host-selective toxins (HSTs) ACT-toxins responsible for brown spot of tangerine disease by the tangerine pathotype which affects tangerines and mandarins. ACT-toxins consist of three moieties, 9,10-epoxy-8-hydroxy-9-methyl-decatrienoic acid (EDA), valine and a polyketide. ACT-toxin I is toxic to both citrus and pear; toxin II the 5''-deoxy derivative of ACT-toxin I, is highly toxic to pear and slightly toxic to citrus. On cellular level, ACT-toxins affect plasma membrane of susceptible cells and cause a sudden increase in loss of K(+) after a few minutes of toxin treatment. The acyl-CoA ligase ACTT1, the hydrolase ACTT2, the enoyl-CoA hydratases ACTT3 and ACTT6, and the acyl-CoA synthetase ACTT5 are all involved in the biosynthesis of the AK-, AF- and ACT-toxin common 9,10-epoxy-8-hydroxy-9-methyl-decatrienoic acid (EDA) structural moiety. The exact role of each enzyme, and of additional enzymes identified within the AF-toxin clusters have still to be determined. On the other hand, ACTTS1 to ACTTS4 are specific to the tangerine pathotype. The function of ACTTS3 is to elongate the polyketide chain portion of ACT-toxin that is unique to this toxin. The enoyl-reductase ACTTS2 might complement the missing enoyl-reductase (ER) domain in ACTTS3 in the synthesis of the polyketide portion of ACT-toxin. The roles of the nonribosomal peptide synthetases-related proteins ACTTS1 and ACTTS4 have also still not been elucidated. The polypeptide is Abhydrolase domain-containing protein ACTT2-1 (Alternaria alternata (Alternaria rot fungus)).